A 1217-amino-acid polypeptide reads, in one-letter code: DNA-directed RNA polymerase subunit beta' (1217 aa).

Zn(2+) is bound by residues Cys60, Cys62, Cys75, and Cys78. Residues Asp449, Asp451, and Asp453 each contribute to the Mg(2+) site. Residues Cys818, Cys892, Cys899, and Cys902 each coordinate Zn(2+).

The protein belongs to the RNA polymerase beta' chain family. The RNAP catalytic core consists of 2 alpha, 1 beta, 1 beta' and 1 omega subunit. When a sigma factor is associated with the core the holoenzyme is formed, which can initiate transcription. Mg(2+) is required as a cofactor. Zn(2+) serves as cofactor.

It catalyses the reaction RNA(n) + a ribonucleoside 5'-triphosphate = RNA(n+1) + diphosphate. In terms of biological role, DNA-dependent RNA polymerase catalyzes the transcription of DNA into RNA using the four ribonucleoside triphosphates as substrates. In Enterococcus faecalis (strain ATCC 700802 / V583), this protein is DNA-directed RNA polymerase subunit beta'.